The following is a 430-amino-acid chain: Bifunctional protein GlmU (430 aa).

The pyrophosphorylase stretch occupies residues 1–223 (MSFSVVILAA…KNEFQGVNSK (223 aa)). Residues 8–11 (LAAG), K22, and 81–82 (GT) each bind UDP-N-acetyl-alpha-D-glucosamine. Mg(2+) is bound at residue D102. The UDP-N-acetyl-alpha-D-glucosamine site is built by G135, E149, N164, and N221. Mg(2+) is bound at residue N221. The interval 224–244 (YDLANAEIVMQDRIKRHWMQQ) is linker. The segment at 245-430 (GVIMRLPQTI…DFYYKFFGKN (186 aa)) is N-acetyltransferase. The UDP-N-acetyl-alpha-D-glucosamine site is built by R308 and K325. Catalysis depends on H336, which acts as the Proton acceptor. UDP-N-acetyl-alpha-D-glucosamine-binding residues include Y339 and N350. Acetyl-CoA is bound by residues A353, 359–360 (NY), S378, A396, and R413.

It in the N-terminal section; belongs to the N-acetylglucosamine-1-phosphate uridyltransferase family. The protein in the C-terminal section; belongs to the transferase hexapeptide repeat family. In terms of assembly, homotrimer. The cofactor is Mg(2+).

Its subcellular location is the cytoplasm. It catalyses the reaction alpha-D-glucosamine 1-phosphate + acetyl-CoA = N-acetyl-alpha-D-glucosamine 1-phosphate + CoA + H(+). The enzyme catalyses N-acetyl-alpha-D-glucosamine 1-phosphate + UTP + H(+) = UDP-N-acetyl-alpha-D-glucosamine + diphosphate. The protein operates within nucleotide-sugar biosynthesis; UDP-N-acetyl-alpha-D-glucosamine biosynthesis; N-acetyl-alpha-D-glucosamine 1-phosphate from alpha-D-glucosamine 6-phosphate (route II): step 2/2. It participates in nucleotide-sugar biosynthesis; UDP-N-acetyl-alpha-D-glucosamine biosynthesis; UDP-N-acetyl-alpha-D-glucosamine from N-acetyl-alpha-D-glucosamine 1-phosphate: step 1/1. Its pathway is bacterial outer membrane biogenesis; LPS lipid A biosynthesis. Its function is as follows. Catalyzes the last two sequential reactions in the de novo biosynthetic pathway for UDP-N-acetylglucosamine (UDP-GlcNAc). The C-terminal domain catalyzes the transfer of acetyl group from acetyl coenzyme A to glucosamine-1-phosphate (GlcN-1-P) to produce N-acetylglucosamine-1-phosphate (GlcNAc-1-P), which is converted into UDP-GlcNAc by the transfer of uridine 5-monophosphate (from uridine 5-triphosphate), a reaction catalyzed by the N-terminal domain. The polypeptide is Bifunctional protein GlmU (Nitratiruptor sp. (strain SB155-2)).